The primary structure comprises 242 residues: Lactate utilization protein A 2 (242 aa).

This sequence belongs to the LutA/YkgE family.

Functionally, is involved in L-lactate degradation and allows cells to grow with lactate as the sole carbon source. This chain is Lactate utilization protein A 2, found in Bacillus cereus (strain 03BB102).